A 59-amino-acid chain; its full sequence is Large ribosomal subunit protein uL30 (59 aa).

This sequence belongs to the universal ribosomal protein uL30 family. In terms of assembly, part of the 50S ribosomal subunit.

In Citrobacter koseri (strain ATCC BAA-895 / CDC 4225-83 / SGSC4696), this protein is Large ribosomal subunit protein uL30.